The following is a 79-amino-acid chain: Three-finger toxin A2 (79 aa).

The first 21 residues, 1-21 (MKTLLLTLVVVTIVCLDLGNS), serve as a signal peptide directing secretion. Disulfide bonds link C24–C41, C34–C59, C63–C71, and C72–C77.

Belongs to the three-finger toxin family. Short-chain subfamily. In terms of tissue distribution, expressed by the venom gland.

It localises to the secreted. This chain is Three-finger toxin A2, found in Micrurus laticollaris (Balsas coral snake).